The following is a 277-amino-acid chain: MGNGVQPLDPVAIQIGSISVKWYGVIIASAVVIALLLALSEANKRKMDKEIIVDLLIWAIPISIISARIYYVIFEWDFYKNNLGEIVKIWHGGIAIYGALIGAVLTAIIFSRIKKISFWQLADVVAPSLIIAQAIGRWGNFMNQEAHGAETTRAFLEGLHLPDFIINQMYIDGAYYQPTFLYESLWNVLGFIILLIIRRTKIRRGELFLGYVIWYSFGRFFIEGMRTDSLMWGDFRVSQVLSLLLIVLSIGIIIYRRVKMNPPYYMEDKFGKVVKKK.

4 consecutive transmembrane segments (helical) span residues 18 to 38, 51 to 71, 89 to 109, and 116 to 136; these read ISVKWYGVIIASAVVIALLLA, IIVDLLIWAIPISIISARIYY, IWHGGIAIYGALIGAVLTAII, and ISFWQLADVVAPSLIIAQAIG. A 1,2-diacyl-sn-glycero-3-phospho-(1'-sn-glycerol) is bound at residue Arg-137. 3 helical membrane passes run 177–197, 205–225, and 235–255; these read QPTFLYESLWNVLGFIILLII, GELFLGYVIWYSFGRFFIEGM, and FRVSQVLSLLLIVLSIGIIIY.

The protein belongs to the Lgt family.

It localises to the cell membrane. It carries out the reaction L-cysteinyl-[prolipoprotein] + a 1,2-diacyl-sn-glycero-3-phospho-(1'-sn-glycerol) = an S-1,2-diacyl-sn-glyceryl-L-cysteinyl-[prolipoprotein] + sn-glycerol 1-phosphate + H(+). The protein operates within protein modification; lipoprotein biosynthesis (diacylglyceryl transfer). Catalyzes the transfer of the diacylglyceryl group from phosphatidylglycerol to the sulfhydryl group of the N-terminal cysteine of a prolipoprotein, the first step in the formation of mature lipoproteins. This chain is Phosphatidylglycerol--prolipoprotein diacylglyceryl transferase, found in Listeria monocytogenes serotype 4a (strain HCC23).